Here is a 242-residue protein sequence, read N- to C-terminus: MIVFPAVDIKDGVCVRLSQGQADAVTVFSSDPVAQAKYWETQGARYLHVVDLDGAFSGMPKNFELIRDICSQLSIPVQLGGGIRDIETASKYLEAGVRRLIIGTMALEDEETFAELCAKFPGQIGVSLDAVNGQLKSRGWVEDAGITVFDIIPRIEAAGAAFIIYTDISRDGMQTGVNVMALSELCSKTKLPVIAAGGVATLEDVINLQPLVSKGLEGAVSGQAIYTGTLNFAEAMEWIENN.

Residue Asp-8 is the Proton acceptor of the active site. Catalysis depends on Asp-129, which acts as the Proton donor.

Belongs to the HisA/HisF family.

The protein resides in the cytoplasm. The enzyme catalyses 1-(5-phospho-beta-D-ribosyl)-5-[(5-phospho-beta-D-ribosylamino)methylideneamino]imidazole-4-carboxamide = 5-[(5-phospho-1-deoxy-D-ribulos-1-ylimino)methylamino]-1-(5-phospho-beta-D-ribosyl)imidazole-4-carboxamide. Its pathway is amino-acid biosynthesis; L-histidine biosynthesis; L-histidine from 5-phospho-alpha-D-ribose 1-diphosphate: step 4/9. This chain is 1-(5-phosphoribosyl)-5-[(5-phosphoribosylamino)methylideneamino] imidazole-4-carboxamide isomerase, found in Maridesulfovibrio salexigens (strain ATCC 14822 / DSM 2638 / NCIMB 8403 / VKM B-1763) (Desulfovibrio salexigens).